The sequence spans 395 residues: Tyrosine--tRNA ligase 2 (395 aa).

The short motif at 42 to 51 is the 'HIGH' region element; it reads PTAPDIHLGH. A 'KMSKS' region motif is present at residues 226 to 230; that stretch reads KMSKS. K229 serves as a coordination point for ATP. The S4 RNA-binding domain maps to 334-394; the sequence is TPVANLLKDA…GKRKFARITI (61 aa).

This sequence belongs to the class-I aminoacyl-tRNA synthetase family. TyrS type 2 subfamily. Homodimer.

Its subcellular location is the cytoplasm. It catalyses the reaction tRNA(Tyr) + L-tyrosine + ATP = L-tyrosyl-tRNA(Tyr) + AMP + diphosphate + H(+). Catalyzes the attachment of tyrosine to tRNA(Tyr) in a two-step reaction: tyrosine is first activated by ATP to form Tyr-AMP and then transferred to the acceptor end of tRNA(Tyr). This is Tyrosine--tRNA ligase 2 from Vibrio parahaemolyticus serotype O3:K6 (strain RIMD 2210633).